Consider the following 312-residue polypeptide: tRNA pseudouridine synthase B (312 aa).

The active-site Nucleophile is Asp48.

Belongs to the pseudouridine synthase TruB family. Type 1 subfamily.

The catalysed reaction is uridine(55) in tRNA = pseudouridine(55) in tRNA. Responsible for synthesis of pseudouridine from uracil-55 in the psi GC loop of transfer RNAs. This is tRNA pseudouridine synthase B from Haemophilus influenzae (strain ATCC 51907 / DSM 11121 / KW20 / Rd).